We begin with the raw amino-acid sequence, 159 residues long: Phosphopantetheine adenylyltransferase (159 aa).

Serine 8 lines the substrate pocket. ATP-binding positions include serine 8 to phenylalanine 9 and histidine 16. Substrate-binding residues include lysine 40, valine 72, and arginine 86. ATP contacts are provided by residues glycine 87–arginine 89, glutamate 97, and tyrosine 122–serine 128.

Belongs to the bacterial CoaD family. As to quaternary structure, homohexamer. Mg(2+) serves as cofactor.

Its subcellular location is the cytoplasm. The enzyme catalyses (R)-4'-phosphopantetheine + ATP + H(+) = 3'-dephospho-CoA + diphosphate. It participates in cofactor biosynthesis; coenzyme A biosynthesis; CoA from (R)-pantothenate: step 4/5. Its function is as follows. Reversibly transfers an adenylyl group from ATP to 4'-phosphopantetheine, yielding dephospho-CoA (dPCoA) and pyrophosphate. In Treponema pallidum (strain Nichols), this protein is Phosphopantetheine adenylyltransferase.